The following is a 320-amino-acid chain: Phosphoribosylaminoimidazole-succinocarboxamide synthase (320 aa).

The tract at residues 283–303 is disordered; it reads ESDWDRNSPPPPLPESIAHQT.

Belongs to the SAICAR synthetase family.

It carries out the reaction 5-amino-1-(5-phospho-D-ribosyl)imidazole-4-carboxylate + L-aspartate + ATP = (2S)-2-[5-amino-1-(5-phospho-beta-D-ribosyl)imidazole-4-carboxamido]succinate + ADP + phosphate + 2 H(+). The protein operates within purine metabolism; IMP biosynthesis via de novo pathway; 5-amino-1-(5-phospho-D-ribosyl)imidazole-4-carboxamide from 5-amino-1-(5-phospho-D-ribosyl)imidazole-4-carboxylate: step 1/2. The polypeptide is Phosphoribosylaminoimidazole-succinocarboxamide synthase (Rhodopirellula baltica (strain DSM 10527 / NCIMB 13988 / SH1)).